We begin with the raw amino-acid sequence, 244 residues long: Protein A47 (244 aa).

It belongs to the orthopoxvirus A47 protein family.

This chain is Protein A47, found in Homo sapiens (Human).